The following is a 419-amino-acid chain: L-rhamnose isomerase (419 aa).

Mn(2+) is bound by residues H262, D294, and D296.

The protein belongs to the rhamnose isomerase family. Homotetramer. Mn(2+) is required as a cofactor.

The protein localises to the cytoplasm. The enzyme catalyses L-rhamnopyranose = L-rhamnulose. Its pathway is carbohydrate degradation; L-rhamnose degradation; glycerone phosphate from L-rhamnose: step 1/3. Catalyzes the interconversion of L-rhamnose and L-rhamnulose. This chain is L-rhamnose isomerase, found in Salmonella paratyphi A (strain AKU_12601).